The chain runs to 253 residues: Indole-3-glycerol phosphate synthase (253 aa).

This sequence belongs to the TrpC family.

The enzyme catalyses 1-(2-carboxyphenylamino)-1-deoxy-D-ribulose 5-phosphate + H(+) = (1S,2R)-1-C-(indol-3-yl)glycerol 3-phosphate + CO2 + H2O. The protein operates within amino-acid biosynthesis; L-tryptophan biosynthesis; L-tryptophan from chorismate: step 4/5. The chain is Indole-3-glycerol phosphate synthase from Bacillus mycoides (strain KBAB4) (Bacillus weihenstephanensis).